The primary structure comprises 137 residues: MSIVKEFREFAMRGNVVDLAVGVIIGAAFGKIVSSLVADIIMPPLGLLIGGIDFKQFAVTLRDAQGDIPAVVMHYGVFIQNVFDFVIVAFAIFMAIKLINRLNRKKEEPAAVPPAPSKEEVLLTQIRDLLKEQNNRI.

2 consecutive transmembrane segments (helical) span residues 10–30 (FAMRGNVVDLAVGVIIGAAFG) and 76–96 (GVFIQNVFDFVIVAFAIFMAI).

This sequence belongs to the MscL family. Homopentamer.

The protein localises to the cell inner membrane. Functionally, channel that opens in response to stretch forces in the membrane lipid bilayer. May participate in the regulation of osmotic pressure changes within the cell. The polypeptide is Large-conductance mechanosensitive channel (Enterobacter sp. (strain 638)).